A 620-amino-acid polypeptide reads, in one-letter code: Hemagglutinin glycoprotein (620 aa).

Residues 1-37 lie on the Intravirion side of the membrane; the sequence is MSPQRDRTNAFYKDNPHPKGSRIVINREHLMIDRPYV. The interval 1-154 is stalk; sequence MSPQRDRTNA…RIKLDYDQYC (154 aa). Residues 38–58 traverse the membrane as a helical; Signal-anchor for type II membrane protein segment; the sequence is LLAILFVMFLSLIGLLAIAGI. At 59-620 the chain is on the virion surface side; sequence RLHQAAIHTA…EDGTNRRQSC (562 aa). N-linked (GlcNAc...) asparagine; by host glycans are attached at residues asparagine 168, asparagine 187, asparagine 200, asparagine 215, and asparagine 238. 5 disulfides stabilise this stretch: cysteine 188/cysteine 606, cysteine 287/cysteine 300, cysteine 381/cysteine 494, cysteine 386/cysteine 394, and cysteine 570/cysteine 579. The segment at 458 to 543 is interaction with host NECTIN4 receptor; the sequence is PMKNLALGVI…VEHAVVYYVY (86 aa).

Belongs to the paramyxoviruses hemagglutinin-neuraminidase family. Non-sialidase subfamily. In terms of assembly, homodimer; disulfide-linked. Further forms homotetramer (dimer of dimers). Interacts (via C-terminus) with human NECTIN4 (via N-terminus); this interaction allows attachment to the respiratory epithelium and viral entry. Interacts (via C-terminus) with human SLAMF1/CD150 (via N-terminus); this interaction allows attachment and viral entry into the CD150-expressing immune cells.

It localises to the virion membrane. The protein localises to the host cell membrane. Its function is as follows. Attaches the virus to the human SLAMF1/CD150 receptor for entry into host dendritic cells, macrophages, activated memory T cells and naive or memory B cells, thereby explaining the long immunosuppression that follows infection. In the respiratory airways, binds to the NECTIN4 receptor for entry into the host cell. Binding of H protein to the receptor induces a conformational change that allows the F protein to trigger virion/cell membranes fusion. The polypeptide is Hemagglutinin glycoprotein (H) (Homo sapiens (Human)).